The sequence spans 44 residues: Protein PsbN (44 aa).

Residues 6–26 (FFFTIFLWCLLLSITGYSIYV) traverse the membrane as a helical segment.

Belongs to the PsbN family.

It localises to the plastid. It is found in the chloroplast thylakoid membrane. May play a role in photosystem I and II biogenesis. The polypeptide is Protein PsbN (Chlorella vulgaris (Green alga)).